Reading from the N-terminus, the 208-residue chain is Outer-membrane lipoprotein carrier protein (208 aa).

The N-terminal stretch at Met-1–Ala-25 is a signal peptide.

This sequence belongs to the LolA family. As to quaternary structure, monomer.

It localises to the periplasm. Participates in the translocation of lipoproteins from the inner membrane to the outer membrane. Only forms a complex with a lipoprotein if the residue after the N-terminal Cys is not an aspartate (The Asp acts as a targeting signal to indicate that the lipoprotein should stay in the inner membrane). This Vibrio parahaemolyticus serotype O3:K6 (strain RIMD 2210633) protein is Outer-membrane lipoprotein carrier protein.